A 147-amino-acid chain; its full sequence is Phospholipase A2 SSD1043 (147 aa).

The N-terminal stretch at 1 to 22 (MSPKFMFFSIIAVWSCAAVTEA) is a signal peptide. The propeptide occupies 23–28 (LFIQHR). Cystine bridges form between Cys-55–Cys-71, Cys-70–Cys-130, Cys-77–Cys-123, Cys-86–Cys-116, and Cys-109–Cys-121. 2 residues coordinate Ca(2+): Gly-56 and Gly-58. His-74 is a catalytic residue. Ca(2+) is bound at residue Asp-75. Asp-124 is an active-site residue.

It depends on Ca(2+) as a cofactor. In terms of tissue distribution, expressed by the venom gland.

The protein resides in the secreted. It catalyses the reaction a 1,2-diacyl-sn-glycero-3-phosphocholine + H2O = a 1-acyl-sn-glycero-3-phosphocholine + a fatty acid + H(+). Functionally, PLA2 catalyzes the calcium-dependent hydrolysis of the 2-acyl groups in 3-sn-phosphoglycerides. The protein is Phospholipase A2 SSD1043 of Scolopendra dehaani (Thai centipede).